The chain runs to 376 residues: Multiphosphoryl transfer protein (376 aa).

Residues 2–142 form the PTS EIIA type-2 domain; it reads FQLSVQDIHP…EELRALLMGE (141 aa). The active-site Tele-phosphohistidine intermediate; for EIIA activity is histidine 62. The residue at position 62 (histidine 62) is a Phosphohistidine; by HPr. Positions 156–284 are m domain; it reads TLDVIASSLV…LTSDDALTDD (129 aa). The 91-residue stretch at 285 to 375 folds into the HPr domain; the sequence is VLSAEFVVRN…DAIAAGLGEG (91 aa). Histidine 299 functions as the Pros-phosphohistidine intermediate; for HPr activity in the catalytic mechanism. Histidine 299 is subject to Phosphohistidine; by EI.

The protein localises to the cytoplasm. Functionally, the phosphoenolpyruvate-dependent sugar phosphotransferase system (sugar PTS), a major carbohydrate active transport system, catalyzes the phosphorylation of incoming sugar substrates concomitantly with their translocation across the cell membrane. The enzyme II FruAB PTS system is involved in fructose transport. This chain is Multiphosphoryl transfer protein (fruB), found in Salmonella typhi.